The following is a 460-amino-acid chain: tRNA (guanine(10)-N(2))-methyltransferase TRMT11 (460 aa).

An N-acetylalanine modification is found at alanine 2.

This sequence belongs to the class I-like SAM-binding methyltransferase superfamily. TRM11 methyltransferase family. As to quaternary structure, part of the heterodimeric TRMT11-TRM112 methyltransferase complex; this complex forms an active tRNA methyltransferase, where TRMT112 acts as an activator of the catalytic subunit TRMT11.

The protein localises to the cytoplasm. It catalyses the reaction guanosine(10) in tRNA + S-adenosyl-L-methionine = N(2)-methylguanosine(10) in tRNA + S-adenosyl-L-homocysteine + H(+). Catalytic subunit of the TRMT11-TRM112 methyltransferase complex, that specifically mediates the S-adenosyl-L-methionine-dependent N(2)-methylation of guanosine nucleotide at position 10 (m2G10) in tRNAs. This is one of the major tRNA (guanine-N(2))-methyltransferases. In Bos taurus (Bovine), this protein is tRNA (guanine(10)-N(2))-methyltransferase TRMT11.